The following is a 551-amino-acid chain: Chaperonin GroEL 2 (551 aa).

ATP-binding positions include 30–33 (TLGP), Lys-51, 87–91 (DGTTT), Gly-415, and Asp-496.

Belongs to the chaperonin (HSP60) family. As to quaternary structure, forms a cylinder of 14 subunits composed of two heptameric rings stacked back-to-back. Interacts with the co-chaperonin GroES.

It localises to the cytoplasm. The catalysed reaction is ATP + H2O + a folded polypeptide = ADP + phosphate + an unfolded polypeptide.. In terms of biological role, together with its co-chaperonin GroES, plays an essential role in assisting protein folding. The GroEL-GroES system forms a nano-cage that allows encapsulation of the non-native substrate proteins and provides a physical environment optimized to promote and accelerate protein folding. The sequence is that of Chaperonin GroEL 2 from Rhodopseudomonas palustris (strain BisB18).